The sequence spans 986 residues: LRR receptor-like serine/threonine-protein kinase ER2 (986 aa).

An N-terminal signal peptide occupies residues M1–A21. Residues D22–A581 are Extracellular-facing. 2 N-linked (GlcNAc...) asparagine glycosylation sites follow: N64 and N73. 20 LRR repeats span residues A68–N89, L90–C114, S116–L138, K139–Q161, L162–N186, V188–L210, T211–N233, C234–Q259, A261–L280, M281–N304, T306–M329, S330–K352, T354–C377, N379–L401, E402–M425, N427–L449, E450–N472, L473–Q498, L500–C520, and F521–R545. N220 and N233 each carry an N-linked (GlcNAc...) asparagine glycan. Residues N269, N304, and N328 are each glycosylated (N-linked (GlcNAc...) asparagine). N-linked (GlcNAc...) asparagine glycans are attached at residues N373, N391, and N408. The N-linked (GlcNAc...) asparagine glycan is linked to N456. N-linked (GlcNAc...) asparagine glycans are attached at residues N509, N527, and N542. Residues I582–W602 traverse the membrane as a helical segment. Over P603 to E986 the chain is Cytoplasmic. The region spanning L653–L934 is the Protein kinase domain. ATP is bound by residues I659 to V667 and K681. D779 (proton acceptor) is an active-site residue.

This sequence belongs to the protein kinase superfamily. Ser/Thr protein kinase family.

Its subcellular location is the cell membrane. The enzyme catalyses L-seryl-[protein] + ATP = O-phospho-L-seryl-[protein] + ADP + H(+). The catalysed reaction is L-threonyl-[protein] + ATP = O-phospho-L-threonyl-[protein] + ADP + H(+). Functionally, receptor kinase that may be involved in the regulation of cell proliferation and cell growth. This is LRR receptor-like serine/threonine-protein kinase ER2 from Oryza sativa subsp. japonica (Rice).